The primary structure comprises 366 residues: MKFTVEREHLLKPLQQVSGPLGGRPTLPILGNLLLQVADGTLSLTGTDLEMEMVARVTLSQPHEPGATTVPARKFFDICRGLPEGAEIAVQLEGDRMLVRSGRSRFSLSTLPAADFPNLDDWQSEVEFTLPQATMKRLIESTQFSMAHQDVRYYLNGMLFETEGSELRTVATDGHRLAVCSMPLEASLPSHSVIVPRKGVIELMRMLDGGENPLRVQIGSNNIRAHVGDFIFTSKLVDGRFPDYRRVLPKNPDKHLEAGCDILKQAFARAAILSNEKFRGVRLYVSENQLKITANNPEQEEAEEILDVSYGGTEMEIGFNVSYVLDVLNALKCETVRIMLTDSVSSVQIEDAASQSAAYVVMPMRL.

This sequence belongs to the beta sliding clamp family. As to quaternary structure, forms a ring-shaped head-to-tail homodimer around DNA which binds and tethers DNA polymerases and other proteins to the DNA. The DNA replisome complex has a single clamp-loading complex (3 tau and 1 each of delta, delta', psi and chi subunits) which binds 3 Pol III cores (1 core on the leading strand and 2 on the lagging strand) each with a beta sliding clamp dimer. Additional proteins in the replisome are other copies of gamma, psi and chi, Ssb, DNA helicase and RNA primase.

The protein resides in the cytoplasm. Functionally, confers DNA tethering and processivity to DNA polymerases and other proteins. Acts as a clamp, forming a ring around DNA (a reaction catalyzed by the clamp-loading complex) which diffuses in an ATP-independent manner freely and bidirectionally along dsDNA. Initially characterized for its ability to contact the catalytic subunit of DNA polymerase III (Pol III), a complex, multichain enzyme responsible for most of the replicative synthesis in bacteria; Pol III exhibits 3'-5' exonuclease proofreading activity. The beta chain is required for initiation of replication as well as for processivity of DNA replication. The protein is Beta sliding clamp (dnaN) of Salmonella typhimurium (strain LT2 / SGSC1412 / ATCC 700720).